The primary structure comprises 217 residues: Putative oxidative stress regulator AosR (217 aa).

The CXXXC motif lies at cysteine 5 to cysteine 9. Cysteine 5 and cysteine 9 are joined by a disulfide.

Belongs to the AosR family.

In Mycobacterium leprae (strain TN), this protein is Putative oxidative stress regulator AosR.